The sequence spans 445 residues: NADH-quinone oxidoreductase subunit F (445 aa).

61 to 70 (GRGGAGFSTG) is an NAD(+) binding site. Residue 174 to 221 (GAGRYICGEETALINSLEGRRANPRSKPPFPATSGVWGKPTCVNNVET) coordinates FMN. Residues Cys351, Cys354, Cys357, and Cys398 each coordinate [4Fe-4S] cluster.

The protein belongs to the complex I 51 kDa subunit family. Composed of 13 different subunits. Subunits NuoCD, E, F, and G constitute the peripheral sector of the complex. FMN is required as a cofactor. The cofactor is [4Fe-4S] cluster.

The catalysed reaction is a quinone + NADH + 5 H(+)(in) = a quinol + NAD(+) + 4 H(+)(out). NDH-1 shuttles electrons from NADH, via FMN and iron-sulfur (Fe-S) centers, to quinones in the respiratory chain. The immediate electron acceptor for the enzyme in this species is believed to be ubiquinone. Couples the redox reaction to proton translocation (for every two electrons transferred, four hydrogen ions are translocated across the cytoplasmic membrane), and thus conserves the redox energy in a proton gradient. This Salmonella typhimurium (strain LT2 / SGSC1412 / ATCC 700720) protein is NADH-quinone oxidoreductase subunit F (nuoF).